Reading from the N-terminus, the 121-residue chain is MIQRQTYLNVADNSGAKKVQVIGIPYAPRKYATLGDVVTVTVKEALPQGNAKKGKIYRAIIVRTAKEVRRPDGSYIKFDDNACVLLNQYGEPLGTRVLGPIAREVRNKGFTKIASLAPEVV.

Belongs to the universal ribosomal protein uL14 family. In terms of assembly, part of the 50S ribosomal subunit. Forms a cluster with proteins L3 and L19. In the 70S ribosome, L14 and L19 interact and together make contacts with the 16S rRNA in bridges B5 and B8.

Binds to 23S rRNA. Forms part of two intersubunit bridges in the 70S ribosome. The chain is Large ribosomal subunit protein uL14 from Aquifex aeolicus (strain VF5).